We begin with the raw amino-acid sequence, 2213 residues long: Protein sidekick-1 (2213 aa).

The interval 1–73 (MARGARPSAA…GAGRCGGRRA (73 aa)) is disordered. The segment covering 23–38 (AGPGRPRGSPPGRARP) has biased composition (low complexity). Ig-like C2-type domains lie at 104–186 (PYFK…SEVQ), 191–277 (GSFM…SPFI), 293–378 (PTIV…RATA), 386–476 (PYFT…LDVT), and 480–569 (PVFT…ATLT). A disulfide bridge links Cys126 with Cys169. N-linked (GlcNAc...) asparagine glycosylation is found at Asn271 and Asn301. Disulfide bonds link Cys315-Cys362, Cys408-Cys458, and Cys501-Cys553. Asn550, Asn563, and Asn572 each carry an N-linked (GlcNAc...) asparagine glycan. The Ig-like C2-type 6 domain maps to 574–663 (TSIVHPPEDH…GNDSRMARLE (90 aa)). Residues Cys595 and Cys647 are joined by a disulfide bond. Residues Asn655, Asn679, Asn782, Asn821, Asn882, Asn1015, and Asn1024 are each glycosylated (N-linked (GlcNAc...) asparagine). Fibronectin type-III domains lie at 670–766 (SPQN…LPEE), 771–867 (PPKN…TLQG), 872–970 (PPQN…TQED), 974–1068 (AVGH…VPPD), 1072–1171 (APSN…TLQA), 1176–1274 (APTS…TRES), 1279–1376 (APEN…TKDD), 1380–1474 (PPVR…TEKR), 1479–1576 (PPRE…TLQD), 1581–1699 (PPGS…VGEA), 1704–1800 (APQN…THQA), 1804–1899 (APSF…AGPA), and 1902–2000 (SPGS…SAQV). Asn1282 and Asn1333 each carry an N-linked (GlcNAc...) asparagine glycan. N-linked (GlcNAc...) asparagine glycans are attached at residues Asn1654, Asn1748, Asn1767, Asn1819, and Asn1893. The chain crosses the membrane as a helical span at residues 2010–2030 (FLLVMALSSLIVILLVVFALV). At 2031–2213 (LHGQNKKYKN…TPLTGFSSFV (183 aa)) the chain is on the cytoplasmic side. The interval 2075–2098 (STFSKKNGTRSPPRPSPGGLHYSD) is disordered. A PDZ-binding motif is present at residues 2207-2213 (TGFSSFV).

This sequence belongs to the sidekick family. As to quaternary structure, homodimer; mediates homophilic interactions to promote cell adhesion. As to expression, up-regulated in glomeruli in HIV-associated nephropathy. In diseased glomeruli, significantly overexpressed and the expression is no longer restricted to mesangial cells but includes podocytes and parietal epithelial cells.

Its subcellular location is the cell membrane. The protein localises to the synapse. Functionally, adhesion molecule that promotes lamina-specific synaptic connections in the retina. Expressed in specific subsets of interneurons and retinal ganglion cells (RGCs) and promotes synaptic connectivity via homophilic interactions. This Homo sapiens (Human) protein is Protein sidekick-1.